The chain runs to 502 residues: Protein MGF 505-5R (502 aa).

This sequence belongs to the asfivirus MGF 505 family.

In terms of biological role, plays a role in virus cell tropism, and may be required for efficient virus replication in macrophages. The chain is Protein MGF 505-5R from Ornithodoros (relapsing fever ticks).